The following is a 423-amino-acid chain: Large ribosomal subunit protein mL37 (423 aa).

The transit peptide at 1–29 directs the protein to the mitochondrion; sequence MALASGPARRVLARPWGLGLEGCGVPRRG.

The protein belongs to the mitochondrion-specific ribosomal protein mL37 family. As to quaternary structure, component of the mitochondrial ribosome large subunit (39S) which comprises a 16S rRNA and about 50 distinct proteins.

Its subcellular location is the mitochondrion. The polypeptide is Large ribosomal subunit protein mL37 (MRPL37) (Bos taurus (Bovine)).